A 154-amino-acid polypeptide reads, in one-letter code: 3-dehydroquinate dehydratase (154 aa).

Catalysis depends on Tyr-23, which acts as the Proton acceptor. Asn-74, His-80, and Asp-87 together coordinate substrate. His-100 serves as the catalytic Proton donor. Substrate is bound by residues 101 to 102 and Arg-111; that span reads LS.

The protein belongs to the type-II 3-dehydroquinase family. As to quaternary structure, homododecamer.

It carries out the reaction 3-dehydroquinate = 3-dehydroshikimate + H2O. The protein operates within metabolic intermediate biosynthesis; chorismate biosynthesis; chorismate from D-erythrose 4-phosphate and phosphoenolpyruvate: step 3/7. Functionally, catalyzes a trans-dehydration via an enolate intermediate. The protein is 3-dehydroquinate dehydratase of Actinobacillus pleuropneumoniae serotype 5b (strain L20).